A 484-amino-acid chain; its full sequence is EF-hand calcium-binding domain-containing protein 14 (484 aa).

Disordered stretches follow at residues 1-48 (MKKR…TDEE), 227-255 (GSME…HSES), and 313-395 (EQRT…FTSD). Positions 37-48 (PDSDSESSTDEE) are enriched in acidic residues. Polar residues-rich tracts occupy residues 228–239 (SMENNGSNQILP), 315–324 (RTNVSSSTME), and 335–347 (LVTN…QAQS). 2 consecutive EF-hand domains span residues 423–452 (SSIK…WNSL) and 453–484 (GSAM…ALGI). 5 residues coordinate Ca(2+): D466, N468, D470, R472, and E477.

The protein is EF-hand calcium-binding domain-containing protein 14 (Efcab14) of Mus musculus (Mouse).